We begin with the raw amino-acid sequence, 230 residues long: MVKKHSKKYLAAAEKIDHSKKYSLADAATLVKDISFTNFDSNVEVVFDLNVDTTKADQQLRGAIVLPNGSGNPKTVVVFADGEKAKDATQAGADFVGTDDLIQKVQSGWTDFDVAIATPDQMAKVGRVGRALGPKGLMPNPKEGTVTMDVTKAVSDAKGGQVTYRTDKNGNVAVPVGKVSFDSDKLAENIKSVSSTILGARPSTVKGTYVLSAHLASTMGPGVELDVSSL.

This sequence belongs to the universal ribosomal protein uL1 family. In terms of assembly, part of the 50S ribosomal subunit.

Its function is as follows. Binds directly to 23S rRNA. The L1 stalk is quite mobile in the ribosome, and is involved in E site tRNA release. In terms of biological role, protein L1 is also a translational repressor protein, it controls the translation of the L11 operon by binding to its mRNA. The sequence is that of Large ribosomal subunit protein uL1 from Oenococcus oeni (strain ATCC BAA-331 / PSU-1).